We begin with the raw amino-acid sequence, 302 residues long: Probable alpha-L-glutamate ligase (302 aa).

Residues 104 to 287 (LQLLSRKGLG…IAGQIIEYIE (184 aa)) form the ATP-grasp domain. Residues Lys141, 178–179 (EY), Asp187, and 211–213 (RSN) contribute to the ATP site. 3 residues coordinate Mg(2+): Asp248, Glu260, and Asn262. Mn(2+) is bound by residues Asp248, Glu260, and Asn262.

Belongs to the RimK family. Mg(2+) serves as cofactor. The cofactor is Mn(2+).

The polypeptide is Probable alpha-L-glutamate ligase (Chromohalobacter salexigens (strain ATCC BAA-138 / DSM 3043 / CIP 106854 / NCIMB 13768 / 1H11)).